The sequence spans 248 residues: ATP synthase subunit a, chloroplastic (248 aa).

Helical transmembrane passes span 38–58 (QVLLTSWVVIAVLLGSATIAV), 96–116 (VPFIGTMFLFIFVSNWSGALL), 135–155 (INTTVALALLTSVAYFYAGLT), 200–220 (LVVAVLVSLVPLIVPIPVMFL), and 221–241 (GLFTSGIQALIFATLAAAYIG).

It belongs to the ATPase A chain family. As to quaternary structure, F-type ATPases have 2 components, CF(1) - the catalytic core - and CF(0) - the membrane proton channel. CF(1) has five subunits: alpha(3), beta(3), gamma(1), delta(1), epsilon(1). CF(0) has four main subunits: a, b, b' and c.

The protein localises to the plastid. It localises to the chloroplast thylakoid membrane. Functionally, key component of the proton channel; it plays a direct role in the translocation of protons across the membrane. This Pinus thunbergii (Japanese black pine) protein is ATP synthase subunit a, chloroplastic.